The following is a 288-amino-acid chain: Protoheme IX farnesyltransferase (288 aa).

Helical transmembrane passes span 16-36 (VWSLLVFVGVIGAIVAINRFT), 37-57 (LTNILLILIATVSITLGSMGA), 88-108 (VKGLYFGLILMFLSIIILLFF), 111-131 (YLAAVFMAIGLFDNVFIYSYL), 138-158 (WNIILGGFSGGFPVVIGWYTV), 162-182 (FSVLPWFLFALVVIWIPIHVW), 210-230 (AICISSSAVILFIFSIIPVFF), 236-256 (TYMIVATIIAIPMLVYSVLFV), and 265-285 (LKLFIYSSPYLAIIFVLVLIF).

The protein belongs to the UbiA prenyltransferase family. Protoheme IX farnesyltransferase subfamily.

It is found in the cell membrane. It catalyses the reaction heme b + (2E,6E)-farnesyl diphosphate + H2O = Fe(II)-heme o + diphosphate. The protein operates within porphyrin-containing compound metabolism; heme O biosynthesis; heme O from protoheme: step 1/1. Converts heme B (protoheme IX) to heme O by substitution of the vinyl group on carbon 2 of heme B porphyrin ring with a hydroxyethyl farnesyl side group. The sequence is that of Protoheme IX farnesyltransferase from Thermoplasma volcanium (strain ATCC 51530 / DSM 4299 / JCM 9571 / NBRC 15438 / GSS1).